The sequence spans 224 residues: Adenosylcobinamide-GDP ribazoletransferase (224 aa).

4 helical membrane passes run 21 to 41 (LSFK…AAIP), 44 to 64 (LLYL…ATGL), 97 to 117 (GGIF…HSPL), and 156 to 176 (WPAA…TTAV).

It belongs to the CobS family. Requires Mg(2+) as cofactor.

It localises to the cell membrane. The enzyme catalyses alpha-ribazole + adenosylcob(III)inamide-GDP = adenosylcob(III)alamin + GMP + H(+). The catalysed reaction is alpha-ribazole 5'-phosphate + adenosylcob(III)inamide-GDP = adenosylcob(III)alamin 5'-phosphate + GMP + H(+). It functions in the pathway cofactor biosynthesis; adenosylcobalamin biosynthesis; adenosylcobalamin from cob(II)yrinate a,c-diamide: step 7/7. Functionally, joins adenosylcobinamide-GDP and alpha-ribazole to generate adenosylcobalamin (Ado-cobalamin). Also synthesizes adenosylcobalamin 5'-phosphate from adenosylcobinamide-GDP and alpha-ribazole 5'-phosphate. The polypeptide is Adenosylcobinamide-GDP ribazoletransferase (Pyrobaculum aerophilum (strain ATCC 51768 / DSM 7523 / JCM 9630 / CIP 104966 / NBRC 100827 / IM2)).